Reading from the N-terminus, the 122-residue chain is Large ribosomal subunit protein uL14 (122 aa).

Belongs to the universal ribosomal protein uL14 family. As to quaternary structure, part of the 50S ribosomal subunit. Forms a cluster with proteins L3 and L19. In the 70S ribosome, L14 and L19 interact and together make contacts with the 16S rRNA in bridges B5 and B8.

In terms of biological role, binds to 23S rRNA. Forms part of two intersubunit bridges in the 70S ribosome. This Hydrogenovibrio crunogenus (strain DSM 25203 / XCL-2) (Thiomicrospira crunogena) protein is Large ribosomal subunit protein uL14.